The chain runs to 443 residues: ATP-dependent protease ATPase subunit HslU (443 aa).

ATP is bound by residues I20, 62–67 (GVGKTE), D255, E321, and R393.

Belongs to the ClpX chaperone family. HslU subfamily. As to quaternary structure, a double ring-shaped homohexamer of HslV is capped on each side by a ring-shaped HslU homohexamer. The assembly of the HslU/HslV complex is dependent on binding of ATP.

It localises to the cytoplasm. Functionally, ATPase subunit of a proteasome-like degradation complex; this subunit has chaperone activity. The binding of ATP and its subsequent hydrolysis by HslU are essential for unfolding of protein substrates subsequently hydrolyzed by HslV. HslU recognizes the N-terminal part of its protein substrates and unfolds these before they are guided to HslV for hydrolysis. The sequence is that of ATP-dependent protease ATPase subunit HslU from Helicobacter pylori (strain J99 / ATCC 700824) (Campylobacter pylori J99).